A 117-amino-acid polypeptide reads, in one-letter code: uncharacterized protein (117 aa).

The first 18 residues, 1–18, serve as a signal peptide directing secretion; sequence MKFFWVSSLLGLLGLSTA. An N-linked (GlcNAc...) asparagine glycan is attached at Asn86.

This is an uncharacterized protein from Schizosaccharomyces pombe (strain 972 / ATCC 24843) (Fission yeast).